The primary structure comprises 419 residues: 3-isopropylmalate dehydratase large subunit (419 aa).

Residues Cys300, Cys360, and Cys363 each contribute to the [4Fe-4S] cluster site.

Belongs to the aconitase/IPM isomerase family. LeuC type 2 subfamily. As to quaternary structure, heterodimer of LeuC and LeuD. It depends on [4Fe-4S] cluster as a cofactor.

It catalyses the reaction (2R,3S)-3-isopropylmalate = (2S)-2-isopropylmalate. The protein operates within amino-acid biosynthesis; L-leucine biosynthesis; L-leucine from 3-methyl-2-oxobutanoate: step 2/4. Functionally, catalyzes the isomerization between 2-isopropylmalate and 3-isopropylmalate, via the formation of 2-isopropylmaleate. This chain is 3-isopropylmalate dehydratase large subunit, found in Nitratidesulfovibrio vulgaris (strain ATCC 29579 / DSM 644 / CCUG 34227 / NCIMB 8303 / VKM B-1760 / Hildenborough) (Desulfovibrio vulgaris).